Reading from the N-terminus, the 247-residue chain is Cell division protein ZapD (247 aa).

It belongs to the ZapD family. In terms of assembly, interacts with FtsZ.

The protein resides in the cytoplasm. Cell division factor that enhances FtsZ-ring assembly. Directly interacts with FtsZ and promotes bundling of FtsZ protofilaments, with a reduction in FtsZ GTPase activity. The chain is Cell division protein ZapD from Escherichia coli O17:K52:H18 (strain UMN026 / ExPEC).